The chain runs to 508 residues: Photosystem II CP47 reaction center protein (508 aa).

6 helical membrane-spanning segments follow: residues 21 to 36 (SVHI…WAGS), 101 to 115 (IAFS…IWHW), 140 to 156 (GIHL…FGAF), 203 to 218 (IAAG…FHLS), 237 to 252 (VLSS…AFVV), and 457 to 472 (SFAL…HGAR).

The protein belongs to the PsbB/PsbC family. PsbB subfamily. As to quaternary structure, PSII is composed of 1 copy each of membrane proteins PsbA, PsbB, PsbC, PsbD, PsbE, PsbF, PsbH, PsbI, PsbJ, PsbK, PsbL, PsbM, PsbT, PsbX, PsbY, PsbZ, Psb30/Ycf12, at least 3 peripheral proteins of the oxygen-evolving complex and a large number of cofactors. It forms dimeric complexes. Requires Binds multiple chlorophylls. PSII binds additional chlorophylls, carotenoids and specific lipids. as cofactor.

Its subcellular location is the plastid membrane. One of the components of the core complex of photosystem II (PSII). It binds chlorophyll and helps catalyze the primary light-induced photochemical processes of PSII. PSII is a light-driven water:plastoquinone oxidoreductase, using light energy to abstract electrons from H(2)O, generating O(2) and a proton gradient subsequently used for ATP formation. The polypeptide is Photosystem II CP47 reaction center protein (Cuscuta reflexa (Southern Asian dodder)).